Here is a 59-residue protein sequence, read N- to C-terminus: uncharacterized protein (59 aa).

The signal sequence occupies residues 1 to 17; that stretch reads MIASIWYAELGCASAIA.

This is an uncharacterized protein from Rickettsia prowazekii (strain Madrid E).